Consider the following 689-residue polypeptide: Protein SDA1 homolog (689 aa).

3 disordered regions span residues 227–260 (DEKKDSDSESEDEGPTARDLMVRYSTGKKNTKNK), 485–512 (EQEKKEEPEEDDGWESASLSDDDEDGEW), and 623–689 (TDRK…RLMK). Residues 258–319 (KNKKKLDKAM…RFEVKLMHMD (62 aa)) are a coiled coil. Acidic residues predominate over residues 492 to 512 (PEEDDGWESASLSDDDEDGEW). Residues 670-681 (RDKQIALRDSLL) show a composition bias toward basic and acidic residues.

Belongs to the SDA1 family.

It localises to the nucleus. It is found in the nucleolus. Required for 60S pre-ribosomal subunits export to the cytoplasm. This Xenopus laevis (African clawed frog) protein is Protein SDA1 homolog (sdad1).